A 691-amino-acid polypeptide reads, in one-letter code: Lipase 2 (691 aa).

An N-terminal signal peptide occupies residues 1 to 37 (MLRGQEERKYSIRKYSIGVVSVLAATMFVVTSHEAQA). Positions 34–267 (EAQASEKIPT…KPTDKNTDNK (234 aa)) are disordered. Positions 38–296 (SEKIPTTNAA…ADAKKVRPLK (259 aa)) are excised as a propeptide. Residues 41 to 72 (IPTTNAAAQKETLNQPGEQGNAITSHQMQSGK) are compositionally biased toward polar residues. Basic and acidic residues predominate over residues 73–82 (QLDDMHKENG). Composition is skewed to polar residues over residues 94-115 (LQSS…NDNQ), 125-135 (SKQSHQNNATN), 142-172 (DQIQ…QPSI), and 186-196 (PTSTTPPSNDK). 2 stretches are compositionally biased toward basic and acidic residues: residues 197–214 (TAPK…KHPN) and 258–267 (KPTDKNTDNK). Ser-413 acts as the Nucleophile in catalysis. Gly-580 contributes to the Ca(2+) binding site. Residue Asp-604 is the Charge relay system of the active site. Ca(2+) is bound at residue Asp-645. His-646 acts as the Charge relay system in catalysis. Ca(2+) contacts are provided by Asp-648, Asp-653, and Asp-656.

This sequence belongs to the AB hydrolase superfamily. Lipase family.

Its subcellular location is the secreted. The catalysed reaction is a triacylglycerol + H2O = a diacylglycerol + a fatty acid + H(+). The protein is Lipase 2 (lip2) of Staphylococcus aureus (strain MRSA252).